Here is a 1030-residue protein sequence, read N- to C-terminus: Halotolerance protein 9 (1030 aa).

The zn(2)-C6 fungal-type DNA-binding region spans 136–166 (CDHCRKRKIRCDEVDQQTKKCSNCIKFQLPC). The disordered stretch occupies residues 185–208 (HHATPGESLQTSNSISNPVASSSV). Low complexity predominate over residues 196-208 (SNSISNPVASSSV). 2 positions are modified to phosphoserine: serine 221 and serine 937.

Its subcellular location is the cytoplasm. The protein localises to the nucleus. In terms of biological role, putative transcription factor involved in halotolerance. In Saccharomyces cerevisiae (strain ATCC 204508 / S288c) (Baker's yeast), this protein is Halotolerance protein 9 (HAL9).